Here is a 587-residue protein sequence, read N- to C-terminus: Arginine--tRNA ligase (587 aa).

The 'HIGH' region signature appears at 127 to 137 (PNLAKEMHVGH).

Belongs to the class-I aminoacyl-tRNA synthetase family. As to quaternary structure, monomer.

It is found in the cytoplasm. The catalysed reaction is tRNA(Arg) + L-arginine + ATP = L-arginyl-tRNA(Arg) + AMP + diphosphate. In Pseudomonas paraeruginosa (strain DSM 24068 / PA7) (Pseudomonas aeruginosa (strain PA7)), this protein is Arginine--tRNA ligase.